We begin with the raw amino-acid sequence, 311 residues long: Probable manganese-dependent inorganic pyrophosphatase (311 aa).

Mn(2+) contacts are provided by H9, D13, D15, D75, H97, and D149.

Belongs to the PPase class C family. Mn(2+) is required as a cofactor.

The protein resides in the cytoplasm. It catalyses the reaction diphosphate + H2O = 2 phosphate + H(+). In Lactobacillus helveticus (strain DPC 4571), this protein is Probable manganese-dependent inorganic pyrophosphatase.